The primary structure comprises 318 residues: Taste receptor type 2 member 7 (318 aa).

The Extracellular portion of the chain corresponds to 1–9; that stretch reads MTDKVQTTL. A helical transmembrane segment spans residues 10–30; that stretch reads LFLAVGEFSVGILGNAFIGLV. At 31–55 the chain is on the cytoplasmic side; it reads NCMDWIKKRKIASIDLILTSLAISR. A helical transmembrane segment spans residues 56–76; that stretch reads ICLLCVILLDCFILVLYPDVY. Residues 77-94 are Extracellular-facing; the sequence is ATGKEMRIIDFFWILTNH. Residues 95 to 115 form a helical membrane-spanning segment; the sequence is LSIWFATCLSIYYFFKIANFF. The Cytoplasmic segment spans residues 116–128; that stretch reads HPLFLWMKWRIDR. The helical transmembrane segment at 129–149 threads the bilayer; the sequence is VISWILLGCMVLSVFISLPAT. At 150–187 the chain is on the extracellular side; it reads ENLNADFRFCVKAKRKTNLTWSCRVNKTQHASIKLLLN. 2 N-linked (GlcNAc...) asparagine glycosylation sites follow: Asn-167 and Asn-175. The helical transmembrane segment at 188–208 threads the bilayer; it reads LATLLPFCVCLMSFFLLILSL. Residues 209–235 are Cytoplasmic-facing; it reads RRHIRRMQLSATGCRDPSTEAHVRALK. The helical transmembrane segment at 236–256 threads the bilayer; the sequence is AVISFLLLFIAYYLSFLIATS. The Extracellular segment spans residues 257–266; the sequence is SYFMPETELA. The helical transmembrane segment at 267–287 threads the bilayer; it reads VIFGESIALIYPSSHSFILIL. The Cytoplasmic segment spans residues 288–318; the sequence is GNNKLRHASLKVIWKVMSILKGRKFQQHKQI.

The protein belongs to the G-protein coupled receptor T2R family.

Its subcellular location is the membrane. In terms of biological role, gustducin-coupled receptor implicated in the perception of bitter compounds in the oral cavity and the gastrointestinal tract. Signals through PLCB2 and the calcium-regulated cation channel TRPM5. This is Taste receptor type 2 member 7 (TAS2R7) from Pongo pygmaeus (Bornean orangutan).